A 609-amino-acid polypeptide reads, in one-letter code: D-apionate lactonase (609 aa).

The enzyme catalyses D-apionolactone + H2O = D-apionate + H(+). Its pathway is carbohydrate metabolism. In terms of biological role, involved in catabolism of D-apiose. Hydrolyzes D-apionolactone to D-apionate. The protein is D-apionate lactonase of Brucella anthropi (strain ATCC 49188 / DSM 6882 / CCUG 24695 / JCM 21032 / LMG 3331 / NBRC 15819 / NCTC 12168 / Alc 37) (Ochrobactrum anthropi).